A 204-amino-acid chain; its full sequence is LexA repressor (204 aa).

A DNA-binding region (H-T-H motif) is located at residues 28-48 (VREIGEAVGLASSSTVHGHLD). Active-site for autocatalytic cleavage activity residues include Ser-126 and Lys-164.

This sequence belongs to the peptidase S24 family. Homodimer.

The catalysed reaction is Hydrolysis of Ala-|-Gly bond in repressor LexA.. Represses a number of genes involved in the response to DNA damage (SOS response), including recA and lexA. In the presence of single-stranded DNA, RecA interacts with LexA causing an autocatalytic cleavage which disrupts the DNA-binding part of LexA, leading to derepression of the SOS regulon and eventually DNA repair. The chain is LexA repressor from Exiguobacterium sibiricum (strain DSM 17290 / CCUG 55495 / CIP 109462 / JCM 13490 / 255-15).